We begin with the raw amino-acid sequence, 569 residues long: RNA demethylase ALKBH10B (569 aa).

Residues 118 to 151 are a coiled coil; that stretch reads QKVAAKKAEDLKQKKTEEEAEEDLKEVVATEEEE. The segment at 164–190 is disordered; that stretch reads ENDVNGDVEDVEDDSPTSDITDSGSHQ. A compositionally biased stretch (acidic residues) spans 167 to 179; sequence VNGDVEDVEDDSP. Polar residues predominate over residues 180 to 189; the sequence is TSDITDSGSH. 3 residues coordinate Fe cation: histidine 366, glutamate 368, and histidine 421. Arginine 430 lines the 2-oxoglutarate pocket. A compositionally biased stretch (basic residues) spans 531 to 545; it reads KHVKHLPPRAQKKRL. Positions 531–569 are disordered; the sequence is KHVKHLPPRAQKKRLLPLPPAASSSPAGGSTSEPVITVG. A compositionally biased stretch (low complexity) spans 551-560; it reads AASSSPAGGS.

This sequence belongs to the alkB family. The cofactor is Fe(2+).

The catalysed reaction is an N(6)-methyladenosine in mRNA + 2-oxoglutarate + O2 = an adenosine in mRNA + formaldehyde + succinate + CO2. Its function is as follows. Dioxygenase that demethylates RNA by oxidative demethylation: specifically demethylates N(6)-methyladenosine (m6A) RNA, the most prevalent internal modification of messenger RNA (mRNA) in higher eukaryotes. ALKBH10B-mediated mRNA m6A demethylation stabilizes the mRNA of the key flowering time regulators FT, SPL3 and SPL9, which are involved in the control of floral transition. The polypeptide is RNA demethylase ALKBH10B (Arabidopsis thaliana (Mouse-ear cress)).